A 145-amino-acid polypeptide reads, in one-letter code: Large ribosomal subunit protein bL17 (145 aa).

It belongs to the bacterial ribosomal protein bL17 family. Part of the 50S ribosomal subunit. Contacts protein L32.

This chain is Large ribosomal subunit protein bL17, found in Francisella tularensis subsp. tularensis (strain FSC 198).